A 449-amino-acid polypeptide reads, in one-letter code: Tubulin beta-7 chain (449 aa).

GTP contacts are provided by glutamine 11, glutamate 69, serine 138, glycine 142, threonine 143, glycine 144, asparagine 204, and asparagine 226. Glutamate 69 provides a ligand contact to Mg(2+). The tract at residues 422–449 (YQQYQDATADEEGEYEEEEAEYEQEETY) is disordered. The span at 429–449 (TADEEGEYEEEEAEYEQEETY) shows a compositional bias: acidic residues.

The protein belongs to the tubulin family. As to quaternary structure, dimer of alpha and beta chains. A typical microtubule is a hollow water-filled tube with an outer diameter of 25 nm and an inner diameter of 15 nM. Alpha-beta heterodimers associate head-to-tail to form protofilaments running lengthwise along the microtubule wall with the beta-tubulin subunit facing the microtubule plus end conferring a structural polarity. Microtubules usually have 13 protofilaments but different protofilament numbers can be found in some organisms and specialized cells. Mg(2+) is required as a cofactor.

The protein resides in the cytoplasm. It is found in the cytoskeleton. Its function is as follows. Tubulin is the major constituent of microtubules, a cylinder consisting of laterally associated linear protofilaments composed of alpha- and beta-tubulin heterodimers. Microtubules grow by the addition of GTP-tubulin dimers to the microtubule end, where a stabilizing cap forms. Below the cap, tubulin dimers are in GDP-bound state, owing to GTPase activity of alpha-tubulin. The polypeptide is Tubulin beta-7 chain (TUBB7) (Arabidopsis thaliana (Mouse-ear cress)).